A 256-amino-acid polypeptide reads, in one-letter code: Trypsin, alkaline B (256 aa).

An N-terminal signal peptide occupies residues 1 to 17 (MRLFLALLALGFAAVAA). Positions 18-24 (VPANPQR) are cleaved as a propeptide — activation peptide. Residues 25 to 256 (IVGGSTTTIQ…RFANWIRNNS (232 aa)) form the Peptidase S1 domain. A disulfide bridge links Cys55 with Cys71. Residues His70 and Asp115 each act as charge relay system in the active site. Disulfide bonds link Cys180–Cys197 and Cys209–Cys233. Catalysis depends on Ser213, which acts as the Charge relay system.

Belongs to the peptidase S1 family. As to expression, midgut.

It is found in the secreted. It localises to the extracellular space. It catalyses the reaction Preferential cleavage: Arg-|-Xaa, Lys-|-Xaa.. This Manduca sexta (Tobacco hawkmoth) protein is Trypsin, alkaline B.